The sequence spans 154 residues: 17 kDa surface antigen (154 aa).

A signal peptide spans 1-19 (MKLLSKIMIIALAASTLQA). Cys20 is lipidated: N-palmitoyl cysteine. Residue Cys20 is the site of S-diacylglycerol cysteine attachment.

Belongs to the rickettsiale 17 kDa surface antigen family.

It localises to the cell outer membrane. This is 17 kDa surface antigen (omp) from Rickettsia amblyommatis (Rickettsia amblyommii).